A 322-amino-acid polypeptide reads, in one-letter code: Nuclease 1, mitochondrial (322 aa).

H142 (proton acceptor) is an active-site residue. Position 174 (N174) interacts with Mg(2+).

Belongs to the DNA/RNA non-specific endonuclease family. In terms of assembly, homodimer. Mn(2+) is required as a cofactor. Mg(2+) serves as cofactor.

Its subcellular location is the mitochondrion inner membrane. This enzyme has both RNase and DNase activity. It degrades single-stranded DNA and RNA. This chain is Nuclease 1, mitochondrial (pnu1), found in Schizosaccharomyces pombe (strain 972 / ATCC 24843) (Fission yeast).